Here is a 559-residue protein sequence, read N- to C-terminus: MAAQGFLLIASFLLLLFLLARPLGNVLARMINGVPLPLVGGVENGVWRVLGIQNQEMNWRQYLLAILLLNVFGLFVLFAMLMLQGILPLNPQQLPGLSWHLALNTAVSFVSNTNWQSYAGETTLSYFSQMVGLTVQNFLSAASGIAVIFALTRAFARQKVNTLGNAWVDLTRITLWVLLPISLVIALFFIQQGTLQNLLPYASYTSLEGVKQMLPMGPVASQEAIKMLGTNGGGFFNANSSHPFENPTALTNFVQMLAIFLIPAALCFAFGDVVNDRRQGRTLLWAMSLIFVVCAALVMWAEWHGNAHFMQLGVDSNINMEGKESRFGILASSLYAVVTTAASCGAVNAMHDSFTALGGMIPLWLMQIGEVVFGGVGSGLYGMLLFVLLAVFIAGLMIGRTPEYLGKKIDVREMKLTALAILVTPALVLMGTALALMTDAGRSGIFNPGIHGFSEVLYAVSSAANNNGSAFAGLSANSPFWNCLLAFCMFVGRFGVIVPVMAIAGSLVSKNIQPTSSGTLPTHGALFVGLLIGTVLLVGALTFIPALALGPVAEHLSLR.

12 consecutive transmembrane segments (helical) span residues 6-26, 63-83, 131-151, 173-193, 253-273, 283-303, 327-347, 356-376, 379-399, 416-436, 484-504, and 524-544; these read FLLI…LGNV, LLAI…MLML, VGLT…IFAL, ITLW…IQQG, FVQM…FGDV, LLWA…WAEW, FGIL…CGAV, ALGG…FGGV, GLYG…LMIG, LTAL…ALAL, LLAF…MAIA, and GALF…LTFI.

This sequence belongs to the KdpA family. As to quaternary structure, the system is composed of three essential subunits: KdpA, KdpB and KdpC.

The protein localises to the cell inner membrane. Functionally, part of the high-affinity ATP-driven potassium transport (or Kdp) system, which catalyzes the hydrolysis of ATP coupled with the electrogenic transport of potassium into the cytoplasm. This subunit binds the periplasmic potassium ions and delivers the ions to the membrane domain of KdpB through an intramembrane tunnel. The polypeptide is Potassium-transporting ATPase potassium-binding subunit (Enterobacter sp. (strain 638)).